Here is a 671-residue protein sequence, read N- to C-terminus: Autophagy-related protein 22-2 (671 aa).

2 stretches are compositionally biased toward polar residues: residues 1–10 (MVPRNFSESQ) and 19–34 (PSNS…SSSF). The disordered stretch occupies residues 1 to 67 (MVPRNFSESQ…RDVPAQYAGE (67 aa)). N-linked (GlcNAc...) asparagine glycans are attached at residues N5 and N21. Residues 39–60 (ERSSSADHDSMGPDIGSAHRDV) show a composition bias toward basic and acidic residues. 4 consecutive transmembrane segments (helical) span residues 83-103 (YGFA…PITL), 155-175 (SFAM…VVSI), 188-208 (LLLF…TVVP), and 212-232 (LLGA…FVLL). Residues 251-271 (PDFSPEFRPSSVDESPPEHSL) are disordered. A helical membrane pass occupies residues 324–344 (IGIGYSAGLFLQCVSIVIIWL). N346 carries an N-linked (GlcNAc...) asparagine glycan. Helical transmembrane passes span 354–374 (LVLF…ALWL), 422–442 (FFLA…GTAV), 457–477 (GLIN…WAAI), 491–511 (ACIC…LPIV), 523–543 (WEMY…SSYC), 560–582 (YALY…GAIV), and 591–611 (AFWF…FVNV). The interval 634 to 671 (ESAGEGSRGSSIDHESGQNEGLIYPRVGENAGRGRNDI) is disordered.

It belongs to the ATG22 family.

The protein resides in the vacuole membrane. Vacuolar effluxer which mediate the efflux of amino acids resulting from autophagic degradation. The release of autophagic amino acids allows the maintenance of protein synthesis and viability during nitrogen starvation. In Sclerotinia sclerotiorum (strain ATCC 18683 / 1980 / Ss-1) (White mold), this protein is Autophagy-related protein 22-2 (atg22-2).